Reading from the N-terminus, the 124-residue chain is Small ribosomal subunit protein uS13 (124 aa).

A disordered region spans residues 94 to 124 (GLPLRGQRTKNNSRTRKGKRKTVANKKKATK). Residues 100-124 (QRTKNNSRTRKGKRKTVANKKKATK) are compositionally biased toward basic residues.

It belongs to the universal ribosomal protein uS13 family. As to quaternary structure, part of the 30S ribosomal subunit. Forms a loose heterodimer with protein S19. Forms two bridges to the 50S subunit in the 70S ribosome.

In terms of biological role, located at the top of the head of the 30S subunit, it contacts several helices of the 16S rRNA. In the 70S ribosome it contacts the 23S rRNA (bridge B1a) and protein L5 of the 50S subunit (bridge B1b), connecting the 2 subunits; these bridges are implicated in subunit movement. Contacts the tRNAs in the A and P-sites. The sequence is that of Small ribosomal subunit protein uS13 from Flavobacterium johnsoniae (strain ATCC 17061 / DSM 2064 / JCM 8514 / BCRC 14874 / CCUG 350202 / NBRC 14942 / NCIMB 11054 / UW101) (Cytophaga johnsonae).